The sequence spans 490 residues: Homoserine O-acetyltransferase (490 aa).

Residues 47–355 (NAILVCHALT…DYGHDAFLLE (309 aa)) enclose the AB hydrolase-1 domain. S152 acts as the Nucleophile in catalysis. R222 contributes to the substrate binding site. Residues D316 and H349 contribute to the active site. D350 serves as a coordination point for substrate. 2 CBS domains span residues 376-436 (MKTD…LEDV) and 437-490 (MTKD…ISSY).

The protein belongs to the AB hydrolase superfamily. MetX family. As to quaternary structure, homodimer.

The protein resides in the cytoplasm. It catalyses the reaction L-homoserine + acetyl-CoA = O-acetyl-L-homoserine + CoA. The protein operates within amino-acid biosynthesis; L-methionine biosynthesis via de novo pathway; O-acetyl-L-homoserine from L-homoserine: step 1/1. In terms of biological role, transfers an acetyl group from acetyl-CoA to L-homoserine, forming acetyl-L-homoserine. The chain is Homoserine O-acetyltransferase from Methanobrevibacter ruminantium (strain ATCC 35063 / DSM 1093 / JCM 13430 / OCM 146 / M1) (Methanobacterium ruminantium).